Consider the following 585-residue polypeptide: 1-deoxy-D-xylulose-5-phosphate synthase (585 aa).

Residues H80 and 121–123 contribute to the thiamine diphosphate site; that span reads GHS. Mg(2+) is bound at residue D152. Thiamine diphosphate contacts are provided by residues 153-154, N181, Y259, and E334; that span reads GS. N181 lines the Mg(2+) pocket.

Belongs to the transketolase family. DXPS subfamily. As to quaternary structure, homodimer. Mg(2+) serves as cofactor. Thiamine diphosphate is required as a cofactor.

It carries out the reaction D-glyceraldehyde 3-phosphate + pyruvate + H(+) = 1-deoxy-D-xylulose 5-phosphate + CO2. The protein operates within metabolic intermediate biosynthesis; 1-deoxy-D-xylulose 5-phosphate biosynthesis; 1-deoxy-D-xylulose 5-phosphate from D-glyceraldehyde 3-phosphate and pyruvate: step 1/1. Its function is as follows. Catalyzes the acyloin condensation reaction between C atoms 2 and 3 of pyruvate and glyceraldehyde 3-phosphate to yield 1-deoxy-D-xylulose-5-phosphate (DXP). The sequence is that of 1-deoxy-D-xylulose-5-phosphate synthase from Buchnera aphidicola subsp. Schizaphis graminum (strain Sg).